The following is a 453-amino-acid chain: Bifunctional protein GlmU (453 aa).

Residues Met-1 to Arg-226 form a pyrophosphorylase region. UDP-N-acetyl-alpha-D-glucosamine-binding positions include Leu-8–Gly-11, Lys-22, Gln-73, Gly-78–Thr-79, Tyr-100–Asp-102, Gly-137, Glu-151, Asn-166, and Asn-224. Asp-102 is a binding site for Mg(2+). Asn-224 contributes to the Mg(2+) binding site. The linker stretch occupies residues Ile-227–Gln-247. Residues Gly-248–Lys-453 are N-acetyltransferase. UDP-N-acetyl-alpha-D-glucosamine is bound by residues Arg-330 and Lys-348. Catalysis depends on His-360, which acts as the Proton acceptor. 2 residues coordinate UDP-N-acetyl-alpha-D-glucosamine: Tyr-363 and Asn-374. Residues Ala-377, Asn-383–Tyr-384, Ser-402, Ala-420, and Arg-437 each bind acetyl-CoA.

This sequence in the N-terminal section; belongs to the N-acetylglucosamine-1-phosphate uridyltransferase family. It in the C-terminal section; belongs to the transferase hexapeptide repeat family. Homotrimer. Requires Mg(2+) as cofactor.

It localises to the cytoplasm. The enzyme catalyses alpha-D-glucosamine 1-phosphate + acetyl-CoA = N-acetyl-alpha-D-glucosamine 1-phosphate + CoA + H(+). It carries out the reaction N-acetyl-alpha-D-glucosamine 1-phosphate + UTP + H(+) = UDP-N-acetyl-alpha-D-glucosamine + diphosphate. The protein operates within nucleotide-sugar biosynthesis; UDP-N-acetyl-alpha-D-glucosamine biosynthesis; N-acetyl-alpha-D-glucosamine 1-phosphate from alpha-D-glucosamine 6-phosphate (route II): step 2/2. It functions in the pathway nucleotide-sugar biosynthesis; UDP-N-acetyl-alpha-D-glucosamine biosynthesis; UDP-N-acetyl-alpha-D-glucosamine from N-acetyl-alpha-D-glucosamine 1-phosphate: step 1/1. It participates in bacterial outer membrane biogenesis; LPS lipid A biosynthesis. Catalyzes the last two sequential reactions in the de novo biosynthetic pathway for UDP-N-acetylglucosamine (UDP-GlcNAc). The C-terminal domain catalyzes the transfer of acetyl group from acetyl coenzyme A to glucosamine-1-phosphate (GlcN-1-P) to produce N-acetylglucosamine-1-phosphate (GlcNAc-1-P), which is converted into UDP-GlcNAc by the transfer of uridine 5-monophosphate (from uridine 5-triphosphate), a reaction catalyzed by the N-terminal domain. The protein is Bifunctional protein GlmU of Photobacterium profundum (strain SS9).